Reading from the N-terminus, the 159-residue chain is Large ribosomal subunit protein uL11 (159 aa).

Belongs to the universal ribosomal protein uL11 family. Part of the ribosomal stalk of the 50S ribosomal subunit. Interacts with L10 and the large rRNA to form the base of the stalk. L10 forms an elongated spine to which L12 dimers bind in a sequential fashion forming a multimeric L10(L12)X complex.

In terms of biological role, forms part of the ribosomal stalk which helps the ribosome interact with GTP-bound translation factors. This chain is Large ribosomal subunit protein uL11, found in Methanococcus vannielii (strain ATCC 35089 / DSM 1224 / JCM 13029 / OCM 148 / SB).